A 151-amino-acid polypeptide reads, in one-letter code: Large ribosomal subunit protein bL9 (151 aa).

The protein belongs to the bacterial ribosomal protein bL9 family.

Its function is as follows. Binds to the 23S rRNA. This Nitrosomonas europaea (strain ATCC 19718 / CIP 103999 / KCTC 2705 / NBRC 14298) protein is Large ribosomal subunit protein bL9.